The chain runs to 956 residues: Thrombospondin-3 (956 aa).

The N-terminal stretch at 1-22 (METQELRGALALLLLCFFTSAS) is a signal peptide. Positions 23–193 (QDLQVIDLLT…VESMKIILGG (171 aa)) constitute a Laminin G-like domain. 21 disulfides stabilise this stretch: Cys-278/Cys-289, Cys-283/Cys-300, Cys-303/Cys-314, Cys-320/Cys-332, Cys-326/Cys-341, Cys-344/Cys-368, Cys-374/Cys-388, Cys-382/Cys-397, Cys-400/Cys-412, Cys-418/Cys-432, Cys-426/Cys-442, Cys-444/Cys-455, Cys-471/Cys-478, Cys-483/Cys-503, Cys-519/Cys-539, Cys-542/Cys-562, Cys-578/Cys-598, Cys-601/Cys-621, Cys-639/Cys-659, Cys-679/Cys-699, and Cys-715/Cys-936. Residue Asn-310 is glycosylated (N-linked (GlcNAc...) asparagine). Residues 316–354 (DINECAHADPCFPGSSCINTMPGFHCEACPRGYKGTQVS) form the EGF-like 1; calcium-binding domain. An EGF-like 2; calcium-binding domain is found at 370–410 (DIDECNDGNNGGCDPNSICTNTVGSFKCGPCRLGFLGNQSQ). N-linked (GlcNAc...) asparagine glycosylation occurs at Asn-407. The EGF-like 3 domain maps to 414–456 (PARTCHSPAHSPCHIHAHCLFERNGAVSCQCNVGWAGNGNVCG). TSP type-3 repeat units lie at residues 457 to 491 (TDTD…NSGQ), 492 to 527 (EDAD…NKDQ), 528 to 550 (QNSD…NNDQ), 551 to 586 (KDTD…NPLQ), 587 to 609 (TDRD…NPTQ), 610 to 647 (TDAD…NSSQ), 648 to 687 (LDSD…NPNQ), and 688 to 723 (KDSD…EVTL). Disordered regions lie at residues 518–537 (NCRL…SFGD) and 546–702 (PNND…CEDD). Residues 555-568 (GNGEGDACDNDVDG) show a composition bias toward acidic residues. A compositionally biased stretch (acidic residues) spans 612-628 (ADSDLVGDVCDTNEDSD). An N-linked (GlcNAc...) asparagine glycan is attached at Asn-644. The segment covering 650-667 (SDNDGLGDECDGDDDNDG) has biased composition (acidic residues). The TSP C-terminal domain occupies 727-941 (RAYQTVVLDP…LQYRCNDTVP (215 aa)). An N-linked (GlcNAc...) asparagine glycan is attached at Asn-937.

Belongs to the thrombospondin family. In terms of assembly, oligomer; disulfide-linked.

Functionally, adhesive glycoprotein that mediates cell-to-cell and cell-to-matrix interactions. Can bind to fibrinogen, fibronectin, laminin and type V collagen. The chain is Thrombospondin-3 (THBS3) from Homo sapiens (Human).